A 318-amino-acid polypeptide reads, in one-letter code: L-lactate dehydrogenase (318 aa).

NAD(+) is bound by residues V18, D39, K44, Y69, and 83 to 84 (GA). Residues Q86 and R92 each coordinate substrate. NAD(+)-binding positions include S105, 122–124 (VSN), and S147. 124–127 (NPVD) provides a ligand contact to substrate. A substrate-binding site is contributed by 152 to 155 (DTSR). The active-site Proton acceptor is the H179. Y225 carries the phosphotyrosine modification. T234 provides a ligand contact to substrate.

The protein belongs to the LDH/MDH superfamily. LDH family. In terms of assembly, homotetramer.

It localises to the cytoplasm. The enzyme catalyses (S)-lactate + NAD(+) = pyruvate + NADH + H(+). It functions in the pathway fermentation; pyruvate fermentation to lactate; (S)-lactate from pyruvate: step 1/1. Functionally, catalyzes the conversion of lactate to pyruvate. This Clostridium botulinum (strain Okra / Type B1) protein is L-lactate dehydrogenase.